Here is a 554-residue protein sequence, read N- to C-terminus: Carboxypeptidase Y homolog A (554 aa).

Residues 1–17 form the signal peptide; the sequence is MRISASTVLLGAASAAS. A propeptide spanning residues 18–137 is cleaved from the precursor; the sequence is AASFQNQAQH…QLDNFNLRVK (120 aa). 5 disulfide bridges follow: Cys-191-Cys-431, Cys-325-Cys-339, Cys-349-Cys-372, Cys-356-Cys-365, and Cys-394-Cys-401. Residue Asn-222 is glycosylated (N-linked (GlcNAc...) asparagine). Ser-278 is an active-site residue. The active site involves Asp-470. N-linked (GlcNAc...) asparagine glycosylation is present at Asn-518. Residue His-529 is part of the active site.

This sequence belongs to the peptidase S10 family.

The protein localises to the vacuole. It catalyses the reaction Release of a C-terminal amino acid with broad specificity.. Vacuolar carboxypeptidase involved in degradation of small peptides. Digests preferentially peptides containing an aliphatic or hydrophobic residue in P1' position, as well as methionine, leucine or phenylalanine in P1 position of ester substrate. The chain is Carboxypeptidase Y homolog A (cpyA) from Neurospora crassa (strain ATCC 24698 / 74-OR23-1A / CBS 708.71 / DSM 1257 / FGSC 987).